Consider the following 276-residue polypeptide: Adenylate kinase (276 aa).

38–43 (GSGKGT) contacts ATP. An NMP region spans residues 58 to 87 (STGDMLRAAIEQGTETGKQAKTIMDQGGLV). AMP contacts are provided by residues threonine 59, arginine 64, 85 to 87 (GLV), 113 to 116 (GFPR), and glutamine 120. Positions 154-191 (GRLVHPSSGRSYHREFFPPKVDMIDDITGEPLIQRSDD) are LID. ATP is bound by residues arginine 155 and 164 to 165 (SY). Positions 188 and 199 each coordinate AMP. Residue lysine 227 participates in ATP binding.

It belongs to the adenylate kinase family. AK2 subfamily. As to quaternary structure, monomer.

It localises to the cytoplasm. Its subcellular location is the cytosol. It is found in the mitochondrion intermembrane space. It carries out the reaction AMP + ATP = 2 ADP. Its function is as follows. Catalyzes the reversible transfer of the terminal phosphate group between ATP and AMP. Plays an important role in cellular energy homeostasis and in adenine nucleotide metabolism. Adenylate kinase activity is critical for regulation of the phosphate utilization and the AMP de novo biosynthesis pathways. This Dictyostelium discoideum (Social amoeba) protein is Adenylate kinase (adkA).